Here is a 193-residue protein sequence, read N- to C-terminus: Thioredoxin reductase-like selenoprotein T1a (193 aa).

An N-terminal signal peptide occupies residues 1 to 21 (MRWLPFSALLLWALCLHSASA). The segment at residues 44–47 (CVSU) is a cross-link (cysteinyl-selenocysteine (Cys-Sec)). Residue selenocysteine 47 is a non-standard amino acid, selenocysteine. A helical transmembrane segment spans residues 83-101 (IASFLSMFKLLLIGVIILG).

It belongs to the SelWTH family. Selenoprotein T subfamily. Post-translationally, may contain a selenide-sulfide bond between Cys-44 and Sec-47. This bond is speculated to serve as redox-active pair. As to expression, expressed in embryonic olfactory vesicles and the photoreceptor cell layer of the embryonic retina. Low level in embryonic epiphysis.

Its subcellular location is the endoplasmic reticulum membrane. The enzyme catalyses [thioredoxin]-dithiol + NADP(+) = [thioredoxin]-disulfide + NADPH + H(+). In terms of biological role, selenoprotein with thioredoxin reductase-like oxidoreductase activity. This is Thioredoxin reductase-like selenoprotein T1a from Danio rerio (Zebrafish).